We begin with the raw amino-acid sequence, 319 residues long: Serine/threonine-protein phosphatase PP1 isozyme 2 (319 aa).

Positions 61, 63, 89, and 121 each coordinate Mn(2+). The active-site Proton donor is the His-122. Mn(2+) is bound by residues His-170 and His-245.

It belongs to the PPP phosphatase family. PP-1 subfamily. Requires Mn(2+) as cofactor.

The enzyme catalyses O-phospho-L-seryl-[protein] + H2O = L-seryl-[protein] + phosphate. The catalysed reaction is O-phospho-L-threonyl-[protein] + H2O = L-threonyl-[protein] + phosphate. The polypeptide is Serine/threonine-protein phosphatase PP1 isozyme 2 (Acetabularia peniculus (Green alga)).